We begin with the raw amino-acid sequence, 977 residues long: Bifunctional glutamine synthetase adenylyltransferase/adenylyl-removing enzyme (977 aa).

Residues 1–457 (MRLPLPSDLP…HFRQVIADPD (457 aa)) form an adenylyl removase region. The tract at residues 468-977 (GGEWSPLWEQ…RRIWGELGLS (510 aa)) is adenylyl transferase.

It belongs to the GlnE family. The cofactor is Mg(2+).

The enzyme catalyses [glutamine synthetase]-O(4)-(5'-adenylyl)-L-tyrosine + phosphate = [glutamine synthetase]-L-tyrosine + ADP. It carries out the reaction [glutamine synthetase]-L-tyrosine + ATP = [glutamine synthetase]-O(4)-(5'-adenylyl)-L-tyrosine + diphosphate. In terms of biological role, involved in the regulation of glutamine synthetase GlnA, a key enzyme in the process to assimilate ammonia. When cellular nitrogen levels are high, the C-terminal adenylyl transferase (AT) inactivates GlnA by covalent transfer of an adenylyl group from ATP to specific tyrosine residue of GlnA, thus reducing its activity. Conversely, when nitrogen levels are low, the N-terminal adenylyl removase (AR) activates GlnA by removing the adenylyl group by phosphorolysis, increasing its activity. The regulatory region of GlnE binds the signal transduction protein PII (GlnB) which indicates the nitrogen status of the cell. The protein is Bifunctional glutamine synthetase adenylyltransferase/adenylyl-removing enzyme of Pseudomonas putida (strain ATCC 47054 / DSM 6125 / CFBP 8728 / NCIMB 11950 / KT2440).